We begin with the raw amino-acid sequence, 258 residues long: Snake venom serine proteinase 8 (258 aa).

Positions 1 to 18 are cleaved as a signal peptide; sequence MVLIRVLANLLILQLSYA. Residues 19-24 constitute a propeptide that is removed on maturation; sequence QKSSEL. Residues 25-249 form the Peptidase S1 domain; sequence VIGGDECNIN…YNDWIQSIIA (225 aa). Intrachain disulfides connect Cys-31-Cys-163, Cys-50-Cys-66, Cys-98-Cys-256, Cys-142-Cys-210, Cys-174-Cys-189, and Cys-200-Cys-225. Asn-44 is a glycosylation site (N-linked (GlcNAc...) asparagine). Residues His-65 and Asp-110 each act as charge relay system in the active site. The active-site Charge relay system is Ser-204.

Belongs to the peptidase S1 family. Snake venom subfamily. As to quaternary structure, monomer. In terms of tissue distribution, expressed by the venom gland.

It localises to the secreted. Its function is as follows. Snake venom serine protease that may act in the hemostasis system of the prey. This Crotalus adamanteus (Eastern diamondback rattlesnake) protein is Snake venom serine proteinase 8.